The following is a 372-amino-acid chain: Dual-specificity RNA methyltransferase RlmN (372 aa).

Glu93 serves as the catalytic Proton acceptor. One can recognise a Radical SAM core domain in the interval 99–338 (EKDRATLCIS…VTVRKTRGDD (240 aa)). Cys106 and Cys343 form a disulfide bridge. Residues Cys113, Cys117, and Cys120 each coordinate [4Fe-4S] cluster. Residues 167–168 (GE), Ser199, 221–223 (SLH), and Asn300 each bind S-adenosyl-L-methionine. Cys343 serves as the catalytic S-methylcysteine intermediate.

The protein belongs to the radical SAM superfamily. RlmN family. [4Fe-4S] cluster is required as a cofactor.

The protein localises to the cytoplasm. It catalyses the reaction adenosine(2503) in 23S rRNA + 2 reduced [2Fe-2S]-[ferredoxin] + 2 S-adenosyl-L-methionine = 2-methyladenosine(2503) in 23S rRNA + 5'-deoxyadenosine + L-methionine + 2 oxidized [2Fe-2S]-[ferredoxin] + S-adenosyl-L-homocysteine. The enzyme catalyses adenosine(37) in tRNA + 2 reduced [2Fe-2S]-[ferredoxin] + 2 S-adenosyl-L-methionine = 2-methyladenosine(37) in tRNA + 5'-deoxyadenosine + L-methionine + 2 oxidized [2Fe-2S]-[ferredoxin] + S-adenosyl-L-homocysteine. Functionally, specifically methylates position 2 of adenine 2503 in 23S rRNA and position 2 of adenine 37 in tRNAs. m2A2503 modification seems to play a crucial role in the proofreading step occurring at the peptidyl transferase center and thus would serve to optimize ribosomal fidelity. In Psychromonas ingrahamii (strain DSM 17664 / CCUG 51855 / 37), this protein is Dual-specificity RNA methyltransferase RlmN.